The chain runs to 116 residues: Large ribosomal subunit protein uL18 (116 aa).

The protein belongs to the universal ribosomal protein uL18 family. Part of the 50S ribosomal subunit; part of the 5S rRNA/L5/L18/L25 subcomplex. Contacts the 5S and 23S rRNAs.

This is one of the proteins that bind and probably mediate the attachment of the 5S RNA into the large ribosomal subunit, where it forms part of the central protuberance. This chain is Large ribosomal subunit protein uL18, found in Mycoplasma pneumoniae (strain ATCC 29342 / M129 / Subtype 1) (Mycoplasmoides pneumoniae).